A 386-amino-acid chain; its full sequence is Benzoyl-CoA reductase subunit C (386 aa).

Belongs to the FldB/FldC dehydratase alpha/beta subunit family. In terms of assembly, heterotetramer composed of A, B, C, and D subunits. The cofactor is iron-sulfur cluster. An oxidized flavin is required as a cofactor.

The catalysed reaction is cyclohexa-1,5-diene-1-carbonyl-CoA + oxidized 2[4Fe-4S]-[ferredoxin] + 2 ADP + 2 phosphate = reduced 2[4Fe-4S]-[ferredoxin] + benzoyl-CoA + 2 ATP + 2 H2O. It catalyses the reaction 3-hydroxybenzoyl-CoA + AH2 + 2 ATP + 2 H2O = 3-hydroxycyclohexa-1,5-diene-1-carbonyl-CoA + A + 2 ADP + 2 phosphate + 2 H(+). Its function is as follows. Catalyzes the anaerobic reduction of benzoyl-CoA and 3-hydroxybenzoyl-CoA to form cyclohexa-1,5-diene-1-carbonyl-CoA and 3-hydroxycyclohexa-1,5-diene-1-carbonyl-CoA, respectively. The enzyme also reduces other benzoyl-CoA analogs with small substituents at the aromatic ring. The sequence is that of Benzoyl-CoA reductase subunit C (bcrC) from Thauera aromatica.